Here is an 897-residue protein sequence, read N- to C-terminus: Leucine--tRNA ligase (897 aa).

The 'HIGH' region motif lies at 42–52 (PYPSGKLHMGH). Positions 645–649 (TMSKS) match the 'KMSKS' region motif. Lysine 648 lines the ATP pocket.

It belongs to the class-I aminoacyl-tRNA synthetase family.

Its subcellular location is the cytoplasm. The enzyme catalyses tRNA(Leu) + L-leucine + ATP = L-leucyl-tRNA(Leu) + AMP + diphosphate. The sequence is that of Leucine--tRNA ligase from Paracidovorax citrulli (strain AAC00-1) (Acidovorax citrulli).